The chain runs to 223 residues: Putative C-type lectin protein 51 (223 aa).

The signal sequence occupies residues 1–31 (MAKRINFTSCLIFTSCFTAFIVSLCLLVSSC). The region spanning 111 to 218 (QEGRCYHYSR…CDTPRRCLCG (108 aa)) is the C-type lectin domain. The cysteines at positions 193 and 209 are disulfide-linked.

The polypeptide is Putative C-type lectin protein 51 (51) (Equine herpesvirus 2 (strain 86/87) (EHV-2)).